Consider the following 44-residue polypeptide: MKRTFQPNRARRKKKIGFRARMDTSGGRRILSARRRKGRKTISA.

The disordered stretch occupies residues 21 to 44; that stretch reads RMDTSGGRRILSARRRKGRKTISA. The segment covering 31–44 has biased composition (basic residues); it reads LSARRRKGRKTISA.

This sequence belongs to the bacterial ribosomal protein bL34 family.

In Endomicrobium trichonymphae, this protein is Large ribosomal subunit protein bL34.